The sequence spans 603 residues: Adenine deaminase (603 aa).

It belongs to the metallo-dependent hydrolases superfamily. Adenine deaminase family. In terms of assembly, homodimer. The cofactor is Mn(2+).

It carries out the reaction adenine + H2O + H(+) = hypoxanthine + NH4(+). The polypeptide is Adenine deaminase (Klebsiella pneumoniae subsp. pneumoniae (strain ATCC 700721 / MGH 78578)).